The chain runs to 60 residues: Cytotoxin 2 (60 aa).

4 cysteine pairs are disulfide-bonded: Cys-3-Cys-21, Cys-14-Cys-38, Cys-42-Cys-53, and Cys-54-Cys-59.

It belongs to the three-finger toxin family. Short-chain subfamily. Type IA cytotoxin sub-subfamily. In terms of assembly, monomer in solution; Homodimer and oligomer in the presence of negatively charged lipids forming a pore with a size ranging between 20 and 30 Angstroms. In terms of tissue distribution, expressed by the venom gland.

The protein localises to the secreted. It localises to the target cell membrane. In terms of biological role, this three-finger cytotoxin is a basic protein that interacts and penetrates into the cell membrane, with the tips of all the three loops. Cytotoxins which have a Pro-30 (P-type) interacts with membrane stronger that those which have a 'Ser-28' (S-type). CTII interacts with membrane stronger than CTI. The polypeptide is Cytotoxin 2 (Naja oxiana (Central Asian cobra)).